The sequence spans 105 residues: Putative membrane protein insertion efficiency factor (105 aa).

Belongs to the UPF0161 family.

It localises to the cell membrane. Could be involved in insertion of integral membrane proteins into the membrane. This chain is Putative membrane protein insertion efficiency factor, found in Bifidobacterium longum subsp. infantis (strain ATCC 15697 / DSM 20088 / JCM 1222 / NCTC 11817 / S12).